Reading from the N-terminus, the 225-residue chain is Paired immunoglobulin-like type 2 receptor beta-2 (225 aa).

Residues 1–31 (MALLISLPGETPAMAQILLLLSSACLHAGNS) form the signal peptide. At 32-195 (ARSNGGNDFG…NPSLMNLGAM (164 aa)) the chain is on the extracellular side. 3 N-linked (GlcNAc...) asparagine glycosylation sites follow: N90, N107, and N160. A helical transmembrane segment spans residues 196–216 (VTMLLAKVVVIILVYGWMIFL). The Cytoplasmic segment spans residues 217 to 225 (RWKQRPDPA).

Its subcellular location is the membrane. In terms of biological role, paired receptors consist of highly related activating and inhibitory receptors and are widely involved in the regulation of the immune system. PILRB2 is probably a cellular signaling activating receptor that associates with ITAM-bearing adapter molecules on the cell surface. This Mus musculus (Mouse) protein is Paired immunoglobulin-like type 2 receptor beta-2 (Pilrb2).